The primary structure comprises 154 residues: Ribosomal RNA large subunit methyltransferase H (154 aa).

Residues Leu70, Gly102, and Leu121–Leu126 each bind S-adenosyl-L-methionine.

Belongs to the RNA methyltransferase RlmH family. In terms of assembly, homodimer.

It localises to the cytoplasm. It carries out the reaction pseudouridine(1915) in 23S rRNA + S-adenosyl-L-methionine = N(3)-methylpseudouridine(1915) in 23S rRNA + S-adenosyl-L-homocysteine + H(+). Specifically methylates the pseudouridine at position 1915 (m3Psi1915) in 23S rRNA. In Geobacter sp. (strain M21), this protein is Ribosomal RNA large subunit methyltransferase H.